The chain runs to 211 residues: Ribonuclease HII (211 aa).

The RNase H type-2 domain occupies 16–205 (APVCGVDEAG…VKAALAAAAV (190 aa)). Residues D22, E23, and D114 each coordinate a divalent metal cation.

Belongs to the RNase HII family. Requires Mn(2+) as cofactor. Mg(2+) is required as a cofactor.

The protein localises to the cytoplasm. It catalyses the reaction Endonucleolytic cleavage to 5'-phosphomonoester.. Endonuclease that specifically degrades the RNA of RNA-DNA hybrids. The sequence is that of Ribonuclease HII (rnhB) from Caulobacter vibrioides (strain ATCC 19089 / CIP 103742 / CB 15) (Caulobacter crescentus).